The primary structure comprises 283 residues: Tetrahydroxynaphthalene reductase (283 aa).

A disordered region spans residues 1–21 (MPAVTQPRGESKYDAIPGPLG). 39–63 (RGIGREMAMELGRRGCKVIVNYANS) contributes to the NADP(+) binding site. Position 164 (serine 164) interacts with substrate. Tyrosine 178 functions as the Proton acceptor in the catalytic mechanism.

This sequence belongs to the short-chain dehydrogenases/reductases (SDR) family. In terms of assembly, homotetramer.

It carries out the reaction scytalone + NADP(+) = naphthalene-1,3,6,8-tetrol + NADPH + H(+). It participates in pigment biosynthesis; melanin biosynthesis. Its function is as follows. Catalyzes the NADPH-dependent reduction of 1,3,6,8-tetrahydroxynaphthalene (T4HN) into (+)-scytalone and 1,3,8-trihydroxynaphthalene into (-)-vermelone. This enzyme is the biochemical target of several commercially important fungicides which are used to prevent blast disease in rice plants. The sequence is that of Tetrahydroxynaphthalene reductase from Pyricularia oryzae (strain 70-15 / ATCC MYA-4617 / FGSC 8958) (Rice blast fungus).